A 70-amino-acid chain; its full sequence is MPGAMKIFVFILAALILLAQIFQARTAIHRALISKRMEGHCEAECLTFEVKIGGCRAELAPFCCKNRKKH.

A signal peptide spans Met-1–Thr-26. Intrachain disulfides connect Cys-41–Cys-55 and Cys-45–Cys-64.

Belongs to the beta-defensin family. Specifically expressed in testis.

The protein localises to the secreted. Its function is as follows. Has antibacterial activity. In Homo sapiens (Human), this protein is Beta-defensin 107 (DEFB107A).